A 511-amino-acid polypeptide reads, in one-letter code: Probable endopeptidase p60 (511 aa).

Residues 1-27 (MNMKKATIVSAAGIAVTAFAAPSVVSA) form the signal peptide. Residues 28–71 (NTVVVASGDTLWGIASKTGTTVDQLKQLNKLDSDRIVPGQKLTI) form the LysM 1 domain. The region spanning 78-142 (KVEKSVSATW…VNGKYLSDAK (65 aa)) is the SH3b domain. The 44-residue stretch at 175–218 (STYKVKSGDTIWALSVKYGVPVQKLIEWNNLSSSSIYVGQTIAV) folds into the LysM 2 domain. 2 stretches are compositionally biased toward low complexity: residues 229 to 257 (TVKQ…QAKP) and 264 to 282 (KPAV…AKPA). The tract at residues 229 to 291 (TVKQAAPAKV…AVEQKASTPA (63 aa)) is disordered. The LysM 3 domain maps to 297-341 (ATYKVQNGDSLGKIASLFKVSVADLTNWNNLNATITIYAGQELSV). 2 stretches are compositionally biased toward low complexity: residues 347 to 362 (KPKP…SKPA) and 372 to 390 (TNTT…NTSQ). Residues 347-390 (KPKPAAPAKPAVSKPATSTPAKVTPTNTTNNSTPTTNVNNNTSQ) form a disordered region. One can recognise a NlpC/P60 domain in the interval 393–511 (SASFSALYAE…GQYLVGFGRV (119 aa)). Cys423 acts as the Nucleophile in catalysis. The active-site Proton acceptor is His473. Asp485 is a catalytic residue.

Belongs to the peptidase C40 family.

In terms of biological role, this major extracellular protein may be involved in the invasion of non-professional phagocytic cells by Listeria. This chain is Probable endopeptidase p60 (iap), found in Listeria grayi (Listeria murrayi).